Reading from the N-terminus, the 312-residue chain is Short chain dehydrogenase pgmD (312 aa).

Valine 46, isoleucine 47, lysine 171, tyrosine 207, lysine 211, and threonine 242 together coordinate NADP(+). Residue tyrosine 207 is the Proton donor of the active site. Lysine 211 (lowers pKa of active site Tyr) is an active-site residue.

The protein belongs to the short-chain dehydrogenases/reductases (SDR) family.

Its pathway is pigment biosynthesis. It functions in the pathway secondary metabolite biosynthesis. Short chain dehydrogenase; part of the gene cluster that mediates the biosynthesis of pleosporalin A, ascomycone A, as well as a third cryptic naphthoquinone derived pigment, all responsible for the coloration of conidia. Essential for the production of pleosporalin A, but not the 2 other final products. The pathway begins with the biosynthesis of the cyclized heptaketide 3-acetonyl-1,6,8-trihydroxy-2-naphthaldehyde by the NR-PKS pgmA. The C-6 hydroxyl group is further methylated by the O-methyltransferase pgmB to yield fusarubinaldehyde which is in turn oxidized by the cytochrome P450 monooxygenase pgmC at C-9. The C-1 hydroxyl group is then methylated spontaneously. Although pgmE, pgmD and pgmH are essential for the production of pleosporalin A, it is not the case for the 2 other final products and it remains difficult to assign a specific function to each enzyme. PgmF and pgmG seem not to be involved in pigment biosynthesis although they were regulated by the cluster-specific transcription factor pgmR. In Aspergillus terreus (strain NIH 2624 / FGSC A1156), this protein is Short chain dehydrogenase pgmD.